A 333-amino-acid polypeptide reads, in one-letter code: Flotillin-like protein FloA (333 aa).

A helical transmembrane segment spans residues 10-30; that stretch reads IFLIAGGIIFLVLFFHYVPFF.

This sequence belongs to the flotillin-like FloA family. In terms of assembly, homooligomerizes.

It is found in the cell membrane. Its subcellular location is the membrane raft. Functionally, found in functional membrane microdomains (FMM) that may be equivalent to eukaryotic membrane rafts. FMMs are highly dynamic and increase in number as cells age. Flotillins are thought to be important factors in membrane fluidity. The chain is Flotillin-like protein FloA from Bacteroides fragilis (strain ATCC 25285 / DSM 2151 / CCUG 4856 / JCM 11019 / LMG 10263 / NCTC 9343 / Onslow / VPI 2553 / EN-2).